Reading from the N-terminus, the 679-residue chain is Enzymatic polyprotein (679 aa).

Residues 40–130 form a protease region; sequence LHCFVDTGAS…LYEPFIQFTD (91 aa). Asp-45 is a catalytic residue. A Reverse transcriptase domain is found at 272–452; sequence LKVIKPSKSP…KKINFLGLEI (181 aa).

This sequence belongs to the caulimoviridae enzymatic polyprotein family.

It carries out the reaction DNA(n) + a 2'-deoxyribonucleoside 5'-triphosphate = DNA(n+1) + diphosphate. Functionally, encodes for at least two polypeptides: protease (PR) and reverse transcriptase (RT). The protease processes the polyprotein in cis. Reverse transcriptase is multifunctional enzyme that converts the viral RNA genome into dsDNA in viral cytoplasmic capsids. This enzyme displays a DNA polymerase activity that can copy either DNA or RNA templates, and a ribonuclease H (RNase H) activity that cleaves the RNA strand of RNA-DNA heteroduplexes in a partially processive 3'- to 5'-endonucleasic mode. Neo-synthesized pregenomic RNA (pgRNA) are encapsidated, and reverse-transcribed inside the nucleocapsid. Partial (+)DNA is synthesized from the (-)DNA template and generates the relaxed circular DNA (RC-DNA) genome. After budding and infection, the RC-DNA migrates in the nucleus, and is converted into a plasmid-like covalently closed circular DNA (cccDNA). In Arabidopsis thaliana (Mouse-ear cress), this protein is Enzymatic polyprotein.